Reading from the N-terminus, the 691-residue chain is T-box transcription factor TBX2-B (691 aa).

The segment at residues 104-277 (LWDQFHKIGT…HNPFAKGFRD (174 aa)) is a DNA-binding region (T-box). Disordered regions lie at residues 301-440 (CKAD…SLSK) and 612-691 (NLLT…ESPK). The segment covering 325 to 335 (HSPLSAAPSPL) has biased composition (low complexity). 3 stretches are compositionally biased toward basic and acidic residues: residues 340 to 361 (TNRE…EVRS), 378 to 402 (RLED…RKDG), and 415 to 433 (SLEK…KSDP). The segment covering 624–639 (PGSESSKPGSSRESSP) has biased composition (low complexity). The stretch at 659 to 684 (SMKDSINELQRIQRLVSGLERQREVS) forms a coiled coil. The segment covering 678–691 (ERQREVSPGRESPK) has biased composition (basic and acidic residues).

Binds DNA as a monomer.

The protein resides in the nucleus. In terms of biological role, transcription factor which acts as a transcriptional repressor. May also function as a transcriptional activator. Binds to the palindromic T site 5'-TTCACACCTAGGTGTGAA-3' DNA sequence, or a half-site, which are present in the regulatory region of several genes. This Xenopus laevis (African clawed frog) protein is T-box transcription factor TBX2-B (tbx2-b).